The sequence spans 156 residues: Small ribosomal subunit protein uS7 (156 aa).

The protein belongs to the universal ribosomal protein uS7 family. Part of the 30S ribosomal subunit. Contacts proteins S9 and S11.

In terms of biological role, one of the primary rRNA binding proteins, it binds directly to 16S rRNA where it nucleates assembly of the head domain of the 30S subunit. Is located at the subunit interface close to the decoding center, probably blocks exit of the E-site tRNA. This Gloeothece citriformis (strain PCC 7424) (Cyanothece sp. (strain PCC 7424)) protein is Small ribosomal subunit protein uS7.